The following is a 455-amino-acid chain: Probable ATP-dependent RNA helicase DDX47 (455 aa).

The disordered stretch occupies residues 1–21 (MAADEEPDSPSGALQTAAEEE). Ala2 carries the post-translational modification N-acetylalanine. A Phosphoserine modification is found at Ser9. The Q motif signature appears at 24–52 (KTFKDLGVTDVLCEACDQLGWAKPTKIQI). Positions 55 to 226 (IPLALQGRDI…RAALKNPVKC (172 aa)) constitute a Helicase ATP-binding domain. An ATP-binding site is contributed by 68 to 75 (AETGSGKT). Thr149 is modified (phosphothreonine). A DEAD box motif is present at residues 174-177 (DEAD). The region spanning 237–397 (KLQQYYLFIP…VFPTQDEEVM (161 aa)) is the Helicase C-terminal domain. The interval 412 to 455 (MELREHGEKKKRKREDAGDDDDKEGAIGVRNKVAGGKMKKRKGR) is disordered.

It belongs to the DEAD box helicase family. DDX47/RRP3 subfamily. Interacts with AGO1 and AGO2. Interacts with GABARAP. Interacts with NOL8; the interaction is RNA-dependent.

The protein resides in the nucleus. The protein localises to the nucleolus. The enzyme catalyses ATP + H2O = ADP + phosphate + H(+). Involved in apoptosis. May have a role in rRNA processing and mRNA splicing. Associates with pre-rRNA precursors. This is Probable ATP-dependent RNA helicase DDX47 (Ddx47) from Mus musculus (Mouse).